Reading from the N-terminus, the 212-residue chain is Adenylate kinase (212 aa).

10–15 provides a ligand contact to ATP; sequence GAGKGT. An NMP region spans residues 30-59; it reads STGDILREAMAQETELGQKAKSYIDAGELV. AMP is bound by residues threonine 31, arginine 36, 57-59, 84-87, and glutamine 91; these read ELV and GYPR. An LID region spans residues 125-158; the sequence is RRRVHEETGETYHLDHDPPPEDVDPDLIVQRSDD. ATP-binding positions include arginine 126 and 135-136; that span reads TY. Residues arginine 155 and arginine 166 each contribute to the AMP site. Glycine 194 is an ATP binding site.

The protein belongs to the adenylate kinase family. Monomer.

It localises to the cytoplasm. It carries out the reaction AMP + ATP = 2 ADP. The protein operates within purine metabolism; AMP biosynthesis via salvage pathway; AMP from ADP: step 1/1. In terms of biological role, catalyzes the reversible transfer of the terminal phosphate group between ATP and AMP. Plays an important role in cellular energy homeostasis and in adenine nucleotide metabolism. In Salinibacter ruber (strain DSM 13855 / M31), this protein is Adenylate kinase.